The sequence spans 125 residues: Small ribosomal subunit protein uS13 (125 aa).

The disordered stretch occupies residues 95–125 (GLPLRGQRTKTNARTRKGKRKTVANKKIASK).

The protein belongs to the universal ribosomal protein uS13 family. As to quaternary structure, part of the 30S ribosomal subunit. Forms a loose heterodimer with protein S19. Forms two bridges to the 50S subunit in the 70S ribosome.

Its function is as follows. Located at the top of the head of the 30S subunit, it contacts several helices of the 16S rRNA. In the 70S ribosome it contacts the 23S rRNA (bridge B1a) and protein L5 of the 50S subunit (bridge B1b), connecting the 2 subunits; these bridges are implicated in subunit movement. Contacts the tRNAs in the A and P-sites. This is Small ribosomal subunit protein uS13 from Borrelia garinii subsp. bavariensis (strain ATCC BAA-2496 / DSM 23469 / PBi) (Borreliella bavariensis).